Reading from the N-terminus, the 410-residue chain is Auxin-induced protein 5NG4 (410 aa).

The Cytoplasmic portion of the chain corresponds to 1–16 (MASNIMQRCNVFMSER). Residues 17 to 37 (VKLHAAMLALQFGYAGFHIVS) form a helical membrane-spanning segment. Over 38–47 (RAALNMGVSK) the chain is Extracellular. The chain crosses the membrane as a helical span at residues 48–68 (VVFPVYRNILALMLIGPCAYF). At 69-74 (LEKKER) the chain is on the cytoplasmic side. Residues 75–95 (PALTLSFLIQFFLLALCGITG) traverse the membrane as a helical segment. Over 96–109 (QSRILSLRIVLHIP) the chain is Extracellular. The chain crosses the membrane as a helical span at residues 110–130 (TFASAIQNSVPAITFIMAAAL). Over 131 to 141 (RLEKVHISRRD) the chain is Cytoplasmic. Residues 142–162 (GLAKIIGTVACVSGATIITLY) traverse the membrane as a helical segment. The Extracellular segment spans residues 163 to 196 (KGPPITHIWRPNLEVTASYFKAFQGNDLSAKSEN). N-linked (GlcNAc...) asparagine glycosylation is present at asparagine 196. The chain crosses the membrane as a helical span at residues 197–217 (WTLGCIYLLGNCLAWSGWIVL). The region spanning 209–338 (LAWSGWIVLQ…IIIGLYLVLW (130 aa)) is the EamA domain. Over 218–229 (QAPVLKRYPARL) the chain is Cytoplasmic. Residues 230–250 (SVTSFTCFFGVIQFLIIAAFF) form a helical membrane-spanning segment. Topologically, residues 251–264 (ETDLEHWKIHSGGE) are extracellular. Residues 265–285 (LFTILYAGFVASGIAFSVQIW) form a helical membrane-spanning segment. Residues 286 to 292 (CIDRGGP) lie on the Cytoplasmic side of the membrane. Residues 293–313 (VFVAVYQPVQTIAVAIMASII) traverse the membrane as a helical segment. Topologically, residues 314-317 (LGEQ) are extracellular. Residues 318–338 (FYLGGIFGAILIIIGLYLVLW) traverse the membrane as a helical segment. Residues 339–410 (GKSEEKRLGL…IPSPSDEPQP (72 aa)) lie on the Cytoplasmic side of the membrane.

Belongs to the drug/metabolite transporter (DMT) superfamily. Plant drug/metabolite exporter (P-DME) (TC 2.A.7.4) family.

The protein resides in the membrane. This chain is Auxin-induced protein 5NG4, found in Pinus taeda (Loblolly pine).